Consider the following 231-residue polypeptide: Verlamelin biosynthesis protein B (231 aa).

It participates in secondary metabolite biosynthesis. In terms of biological role, part of the gene cluster that mediates the biosynthesis of verlamelin, a lipopeptide that exhibits antifungal activity against plant pathogenic fungi. Verlamelin is a cyclic hexadepsipeptide and is bridged by ester bonding between a 5-hydroxytetradecanoic acid moiety and a carboxyl group on the terminal Val of amide-bonded tetradecanoyl-hexapeptide D-allo-Thr-D-Ala-L-Pro-L-Gln-D-Tyr-L-Val. VlmA and vlmB are altogether regarded as essential components in the biosynthesis of 5-hydroxytetradecanoic acid. VlmA catalyzes the hydroxylation at position C5 of tetradecanoic acid produced in primary metabolism, while the precise function of vlmB still remains to be solved. To be loaded onto the waiting NRPS, 5-hydroxytetradecanoic acid is activated in the form of acyladenylate by the AMP-dependent ligase vlmC. VlmS seems to accept the fatty-acyl intermediate onto the initial module to further elongate amino acid residues by the downstream modules. In addition, in the last module at its C-terminus, vlmS contains a surplus condensation (C) domain that may be involved in cyclization, the last step to form verlamelin. In Lecanicillium sp, this protein is Verlamelin biosynthesis protein B.